Reading from the N-terminus, the 316-residue chain is Coiled-coil domain-containing protein 130 homolog (316 aa).

A coiled-coil region spans residues 182–203 (ANSRLRAEFRQQKKEINGQQEL). The interval 287–316 (KLEETTSSATNEKPISLVGDYSSSDNDSNG) is disordered.

This sequence belongs to the CWC16 family.

The protein is Coiled-coil domain-containing protein 130 homolog of Drosophila melanogaster (Fruit fly).